The primary structure comprises 512 residues: V-type proton ATPase subunit B (512 aa).

ATP is bound at residue Arg381. A disordered region spans residues 484–512 (LYGRDREQDDDEDEDEEDPDKSGDKLIDA). The segment covering 491 to 502 (QDDDEDEDEEDP) has biased composition (acidic residues). Positions 503–512 (DKSGDKLIDA) are enriched in basic and acidic residues.

It belongs to the ATPase alpha/beta chains family. V-ATPase is a heteromultimeric enzyme composed of a peripheral catalytic V1 complex (components A to H) attached to an integral membrane V0 proton pore complex (components: a, c, c', c'', d, e, f and VOA1).

Its subcellular location is the vacuole membrane. Non-catalytic subunit of the V1 complex of vacuolar(H+)-ATPase (V-ATPase), a multisubunit enzyme composed of a peripheral complex (V1) that hydrolyzes ATP and a membrane integral complex (V0) that translocates protons. Plays an important role in resistance to several stresses, as well as in autophagy and virulence. This Candida albicans (strain SC5314 / ATCC MYA-2876) (Yeast) protein is V-type proton ATPase subunit B.